The primary structure comprises 254 residues: Type III pantothenate kinase (254 aa).

6–13 (DVGNTNTV) serves as a coordination point for ATP. Substrate-binding positions include Y100 and 107-110 (GADR). D109 serves as the catalytic Proton acceptor. Residue D129 coordinates K(+). T132 is an ATP binding site. T184 contacts substrate.

Belongs to the type III pantothenate kinase family. Homodimer. It depends on NH4(+) as a cofactor. K(+) serves as cofactor.

Its subcellular location is the cytoplasm. The catalysed reaction is (R)-pantothenate + ATP = (R)-4'-phosphopantothenate + ADP + H(+). The protein operates within cofactor biosynthesis; coenzyme A biosynthesis; CoA from (R)-pantothenate: step 1/5. Catalyzes the phosphorylation of pantothenate (Pan), the first step in CoA biosynthesis. The chain is Type III pantothenate kinase from Syntrophus aciditrophicus (strain SB).